A 360-amino-acid chain; its full sequence is Phospho-N-acetylmuramoyl-pentapeptide-transferase (360 aa).

The next 10 helical transmembrane spans lie at Tyr-21–Gly-41, Thr-73–Leu-93, Ala-94–Val-114, Trp-132–Gly-152, Ile-168–Ser-188, Gly-199–Thr-219, Phe-235–Trp-255, Val-263–Leu-283, Phe-288–Val-308, and Val-338–Lys-358.

Belongs to the glycosyltransferase 4 family. MraY subfamily. Mg(2+) is required as a cofactor.

It localises to the cell inner membrane. The catalysed reaction is UDP-N-acetyl-alpha-D-muramoyl-L-alanyl-gamma-D-glutamyl-meso-2,6-diaminopimeloyl-D-alanyl-D-alanine + di-trans,octa-cis-undecaprenyl phosphate = di-trans,octa-cis-undecaprenyl diphospho-N-acetyl-alpha-D-muramoyl-L-alanyl-D-glutamyl-meso-2,6-diaminopimeloyl-D-alanyl-D-alanine + UMP. The protein operates within cell wall biogenesis; peptidoglycan biosynthesis. Catalyzes the initial step of the lipid cycle reactions in the biosynthesis of the cell wall peptidoglycan: transfers peptidoglycan precursor phospho-MurNAc-pentapeptide from UDP-MurNAc-pentapeptide onto the lipid carrier undecaprenyl phosphate, yielding undecaprenyl-pyrophosphoryl-MurNAc-pentapeptide, known as lipid I. The sequence is that of Phospho-N-acetylmuramoyl-pentapeptide-transferase from Pasteurella multocida (strain Pm70).